Reading from the N-terminus, the 378-residue chain is MNFTVKYSFLVICLLCCLLSTYVSVIEGHRARPGESRKNPREIIKTFKESGKGIIQGYYPSWVSYNHNLKDLNPNLNVVHMSFAKMDLSYDSIESIVGSPLLFKSLIGLEYIGLNEYFNDAMNLRKARPDIIMLLSLGGETYHPSSFDSALNAVEKIANLVDELGFDGIDVDYEPNGSFDGLNDKEKADFFVQYVTKLREYMCDDKLISISQSSNGALSCIGFNDPKKICMDDEAPYNSKYFNKPDVKKELLRAAQMASAGGAIYLMNNLKDMIDMVFVQTFNYTNSTDSTVMKELYDSYAYYGKKYDYVIIMGFTLMFPSTPFNPNDKMLVKSIGDFVKTENKLNKRADGFGLWSLSSDNAAHNEQLAIEYFVESLH.

An N-terminal signal peptide occupies residues 1 to 28; it reads MNFTVKYSFLVICLLCCLLSTYVSVIEG. The region spanning 53 to 378 is the GH18 domain; that stretch reads GIIQGYYPSW…AIEYFVESLH (326 aa). The active-site Proton donor is Glu-174. A disulfide bridge connects residues Cys-220 and Cys-230.

Belongs to the glycosyl hydrolase 18 family. As to quaternary structure, forms a hetero-multimeric, high molecular weight complex composed of at least CHT1, SOAP AND WARP. Within the complex, may interact with WARP via a disulfide bond.

It is found in the secreted. It localises to the cytoplasmic vesicle. The protein resides in the secretory vesicle. The protein localises to the microneme. The enzyme catalyses Random endo-hydrolysis of N-acetyl-beta-D-glucosaminide (1-&gt;4)-beta-linkages in chitin and chitodextrins.. Inhibited by allosamidin. Functionally, endochitinase that cleaves beta-1,4-linkages between tri- and tetramers of N-acetylglucosamine (GlcNAc) from penta- and hexameric chitin oligomers. Does not cleave smaller chitin oligosaccharides. Required to cross the acellular, chitin-containing peritrophic matrix (PM) which is formed around the ingested blood meal in the mosquito midgut allowing the ookinete to invade the mosquito gut epithelium. In Plasmodium falciparum (isolate 3D7), this protein is Chitinase.